Reading from the N-terminus, the 502-residue chain is Basic immunoglobulin-like variable motif-containing protein (502 aa).

Disordered stretches follow at residues 1–32 (MPNA…LQGA) and 438–460 (SQHP…SKKQ). The segment covering 12–26 (DPGHGEHTSENKSPE) has biased composition (basic and acidic residues).

This sequence belongs to the BIVM family.

It localises to the cytoplasm. The protein localises to the nucleus. The chain is Basic immunoglobulin-like variable motif-containing protein (Bivm) from Mus musculus (Mouse).